Reading from the N-terminus, the 671-residue chain is MQGQKRRVRTCHSCYTRKQKASESDSICDRQYPCNHCTRRRRPEECVYGPPPVKVPSCPPVPADQSETQPRPVESARPTRETPVDDSEAHWSREHSALARSFGYFEDSNSNTMALLRRLELPDQSDTELKNAWPSTWETIHHELDLMPERQIIDFLVQYFVYELNWMKQVIHVPSFLANYQLWWAKDKIVEIADVEFAALIARICSYATQFLPSPSHTVDQIRGRSLADIRDTCSNIGNKLATACETLDWKGTLVRVQHIIFAALKVSCEGRTSQFWEGIGSACRAAQKAGIHTDTTGLESQLAKDSAQELERDVQRRTFCSLYVLDSHLSRQLDRIPFLSNHLIEETLPRLRLIPDIGNIPTETATRAPDIFTERLMQVQLGLFWRGLGLQRTCEFDPTESERIYEKFNSEYLNNLHPAFAIAHPDTTLDKALPKLPMQRQLLYIAIFDSICWNFRPLLLLKPDQVASLAPYKKVLLRSQKRRLGMAALKVLEAVAALHTMFGGSYTRFSAIIFNSFEPAILLLNLCSHADFPFDQDDNSTSLVGTKVRMTYRIAMQAVEQAIHRLQMLADLSDMAASGARVATLLFARSVQPKQSSSPPALTLSVSGSLGPSQFPTPIERYGEQENWPSLEAGDPYSMPDNFPSMAQDSFPSPQLSSLKFPVVWGEAFF.

The zn(2)-C6 fungal-type DNA-binding region spans 11 to 46; that stretch reads CHSCYTRKQKASESDSICDRQYPCNHCTRRRRPEEC. The disordered stretch occupies residues 48–90; that stretch reads YGPPPVKVPSCPPVPADQSETQPRPVESARPTRETPVDDSEAH. A compositionally biased stretch (pro residues) spans 49 to 62; the sequence is GPPPVKVPSCPPVP. Over residues 77 to 90 the composition is skewed to basic and acidic residues; that stretch reads RPTRETPVDDSEAH. A fungal transcription factor domain region spans residues 148-593; the sequence is PERQIIDFLV…ATLLFARSVQ (446 aa). Residues 629–650 are disordered; sequence WPSLEAGDPYSMPDNFPSMAQD.

Its subcellular location is the nucleus. Functionally, transcription factor; part of the gene cluster that mediates the biosynthesis of the 6-methyl-2-pyrone derivative xylariolide D. May play a role in the regulation of the expression of the highly reducing polyketide synthase xilA and the cytochroe P450 monooxygenase xilC. The polypeptide is Transcription factor xilB (Penicillium rubens (strain ATCC 28089 / DSM 1075 / NRRL 1951 / Wisconsin 54-1255) (Penicillium chrysogenum)).